The chain runs to 88 residues: Small ribosomal subunit protein uS17 (88 aa).

This sequence belongs to the universal ribosomal protein uS17 family. As to quaternary structure, part of the 30S ribosomal subunit.

One of the primary rRNA binding proteins, it binds specifically to the 5'-end of 16S ribosomal RNA. The chain is Small ribosomal subunit protein uS17 from Leuconostoc mesenteroides subsp. mesenteroides (strain ATCC 8293 / DSM 20343 / BCRC 11652 / CCM 1803 / JCM 6124 / NCDO 523 / NBRC 100496 / NCIMB 8023 / NCTC 12954 / NRRL B-1118 / 37Y).